A 230-amino-acid polypeptide reads, in one-letter code: E3 ubiquitin-protein ligase RNF114 (230 aa).

The segment at 31-70 adopts an RING-type zinc-finger fold; sequence CPVCLEVYEKPVQVPCGHVFCSACLQECLKPKKPVCGVCR. Zn(2+)-binding residues include Cys93 and Cys96. The C2HC RNF-type zinc finger occupies 93–112; it reads CHGCRKNFFLSKIRAHVATC. Lys104 carries the post-translational modification N6-acetyllysine. Residues His108 and Cys112 each coordinate Zn(2+). Lys114 carries the post-translational modification N6-acetyllysine.

As to quaternary structure, interacts with XAF1, the interaction increases XAF1 stability and proapoptotic effects, and may regulate IFN signaling. In terms of processing, autoubiquitinated. Polyubiquitinated in the presence of E2 enzymes UBE2D1, UBE2D2 and UBE2D3, but only monoubiquitinated in the presence of UBE2E1.

It localises to the cytoplasm. It is found in the nucleus. The catalysed reaction is S-ubiquitinyl-[E2 ubiquitin-conjugating enzyme]-L-cysteine + [acceptor protein]-L-lysine = [E2 ubiquitin-conjugating enzyme]-L-cysteine + N(6)-ubiquitinyl-[acceptor protein]-L-lysine.. It participates in protein modification; protein ubiquitination. Its function is as follows. E3 ubiquitin-protein ligase that promotes the ubiquitination of various substrates. In turn, participates in the regulation of many biological processes including cell cycle, apoptosis, osteoclastogenesis as well as innate or adaptive immunity. Acts as negative regulator of NF-kappa-B-dependent transcription by promoting the ubiquitination and stabilization of the NF-kappa-B inhibitor TNFAIP3. May promote the ubiquitination of TRAF6 as well. Also acts as a negative regulator of T-cell activation. Inhibits cellular dsRNA responses and interferon production by targeting MAVS component for proteasomal degradation. Ubiquitinates the CDK inhibitor CDKN1A leading to its degradationand probably also CDKN1B and CDKN1C. This activity stimulates cell cycle G1-to-S phase transition and suppresses cellular senescence. May play a role in spermatogenesis. This chain is E3 ubiquitin-protein ligase RNF114 (RNF114), found in Bos taurus (Bovine).